Reading from the N-terminus, the 68-residue chain is Alpha-conotoxin-like Ca1.2 (68 aa).

The first 21 residues, 1-21, serve as a signal peptide directing secretion; it reads MGMRMMFTVFLLVVLATTVVS. The propeptide occupies 22–48; it reads FTSDRASEGRNAAAKDKASDLVALTVR. 2 cysteine pairs are disulfide-bonded: Cys-50-Cys-56 and Cys-51-Cys-64. A lacks the Ser-Xaa-Pro motif that is crucial for potent interaction with nAChR region spans residues 52-54; that stretch reads AIR. A Sulfotyrosine modification is found at Tyr-63. Cys-64 bears the Cysteine amide mark. Positions 65-68 are excised as a propeptide; that stretch reads GGIY.

The protein belongs to the conotoxin A superfamily. As to expression, expressed by the venom duct.

Its subcellular location is the secreted. Its function is as follows. Alpha-conotoxins act on postsynaptic membranes, they bind to the nicotinic acetylcholine receptors (nAChR) and thus inhibit them. Has possibly a distinct nAChR binding mode from other alpha-conotoxins, due to a different three residue motif (lacks the Ser-Xaa-Pro motif). The sequence is that of Alpha-conotoxin-like Ca1.2 from Conus caracteristicus (Characteristic cone).